The chain runs to 448 residues: Probable D-serine dehydratase (448 aa).

Lys119 carries the N6-(pyridoxal phosphate)lysine modification.

The protein belongs to the serine/threonine dehydratase family. DsdA subfamily. Pyridoxal 5'-phosphate serves as cofactor.

It catalyses the reaction D-serine = pyruvate + NH4(+). This chain is Probable D-serine dehydratase, found in Pseudomonas paraeruginosa (strain DSM 24068 / PA7) (Pseudomonas aeruginosa (strain PA7)).